We begin with the raw amino-acid sequence, 745 residues long: Exocyst complex component 3 (745 aa).

N6-acetyllysine is present on Lys28.

Belongs to the SEC6 family. The exocyst complex is composed of EXOC1, EXOC2, EXOC3, EXOC4, EXOC5, EXOC6, EXOC7 and EXOC8. Interacts with EXOC3L1. Interacts with BIRC6/bruce. Interacts with MYRIP. Interacts with SLC6A9.

The protein localises to the cytoplasm. It is found in the perinuclear region. It localises to the cell projection. The protein resides in the growth cone. Its subcellular location is the neuron projection. The protein localises to the midbody. It is found in the golgi apparatus. In terms of biological role, component of the exocyst complex involved in the docking of exocytic vesicles with fusion sites on the plasma membrane. This chain is Exocyst complex component 3 (EXOC3), found in Bos taurus (Bovine).